Reading from the N-terminus, the 386-residue chain is Citrate synthase (386 aa).

Active-site residues include H266 and D322.

The protein belongs to the citrate synthase family.

It carries out the reaction oxaloacetate + acetyl-CoA + H2O = citrate + CoA + H(+). It participates in carbohydrate metabolism; tricarboxylic acid cycle; isocitrate from oxaloacetate: step 1/2. The protein is Citrate synthase (gltA) of Acidithiobacillus ferridurans.